A 287-amino-acid chain; its full sequence is UPF0098 protein AF_1698 (287 aa).

The protein belongs to the UPF0098 family.

The chain is UPF0098 protein AF_1698 from Archaeoglobus fulgidus (strain ATCC 49558 / DSM 4304 / JCM 9628 / NBRC 100126 / VC-16).